The following is an 809-amino-acid chain: ATP-dependent zinc metalloprotease FTSH 3, mitochondrial (809 aa).

A mitochondrion-targeting transit peptide spans 1 to 83 (MTMIFFSKLN…FANPRLRRFF (83 aa)). A compositionally biased stretch (basic and acidic residues) spans 93-121 (YENYFPKDKQEPKSDQKSEHKEGSEKNEN). The disordered stretch occupies residues 93 to 122 (YENYFPKDKQEPKSDQKSEHKEGSEKNENE). Residues 132–152 (FQNLLIPLLALAVFFSTFSFG) form a helical membrane-spanning segment. Residue 362-369 (GPPGTGKT) participates in ATP binding. His-586 is a Zn(2+) binding site. Glu-587 is an active-site residue. Residues His-590 and Asp-662 each coordinate Zn(2+). The tract at residues 776-809 (GFEETEKDSAATPTVEPVVDDGAPPPFEPQVVPT) is disordered.

This sequence in the N-terminal section; belongs to the AAA ATPase family. In the C-terminal section; belongs to the peptidase M41 family. The cofactor is Zn(2+).

The protein localises to the mitochondrion inner membrane. In terms of biological role, probable ATP-dependent zinc metallopeptidase. Involved in the assembly and/or stability of the complexes I and V of the mitochondrial oxidative phosphorylation system. The polypeptide is ATP-dependent zinc metalloprotease FTSH 3, mitochondrial (FTSH3) (Arabidopsis thaliana (Mouse-ear cress)).